A 311-amino-acid polypeptide reads, in one-letter code: Heme A synthase (311 aa).

Over 1-6 the chain is Cytoplasmic; the sequence is MQRFIK. The helical transmembrane segment at 7 to 27 threads the bilayer; sequence WLAVITSLDLLVVLLGGALVT. Residues 28-62 are Extracellular-facing; it reads KTGSGQGCGKSWPLCNGEFVPSNLSMETIIELSHR. A disulfide bridge connects residues Cys-35 and Cys-42. The active site involves Glu-58. His-61 lines the heme o pocket. A helical membrane pass occupies residues 63 to 83; that stretch reads LTSGSAGILVTLLCILSWKYY. At 84–91 the chain is on the cytoplasmic side; that stretch reads KHVRETKT. The helical transmembrane segment at 92 to 112 threads the bilayer; it reads LAILSFVFLVAQALMGAAAVV. Residues 113–121 lie on the Extracellular side of the membrane; sequence WGQMPAVLA. Residues 122 to 142 traverse the membrane as a helical segment; the sequence is IHFGISLISFASVILLTCLIF. His-123 serves as a coordination point for heme o. Residues 143–159 lie on the Cytoplasmic side of the membrane; it reads EIDQKFDARSLIMDKKM. The helical transmembrane segment at 160–180 threads the bilayer; that stretch reads KFHIYGVTIYSYIVVYTGALV. The Extracellular segment spans residues 181-211; sequence RHERATLACPDFPLCSKSRPMPTQLHEWVQM. Cys-189 and Cys-195 are joined by a disulfide. Residues 212–232 traverse the membrane as a helical segment; the sequence is GHRVAAMLIFAWILYAMIIAI. His-213 contacts heme b. Topologically, residues 233-243 are cytoplasmic; the sequence is RHYKQQRVVYW. The chain crosses the membrane as a helical span at residues 244-264; the sequence is GWIISFILVTLQAIVGILVVF. Topologically, residues 265-271 are extracellular; it reads TNASLAM. A helical transmembrane segment spans residues 272 to 292; that stretch reads ALLHSLFISCLFAVLCYLVMI. His-275 contacts heme b. Topologically, residues 293–311 are cytoplasmic; the sequence is GTRSTVNAKETESTSKQTK.

It belongs to the COX15/CtaA family. Type 1 subfamily. In terms of assembly, interacts with CtaB. Heme b serves as cofactor.

The protein resides in the cell membrane. The catalysed reaction is Fe(II)-heme o + 2 A + H2O = Fe(II)-heme a + 2 AH2. Its pathway is porphyrin-containing compound metabolism; heme A biosynthesis; heme A from heme O: step 1/1. Catalyzes the conversion of heme O to heme A by two successive hydroxylations of the methyl group at C8. The first hydroxylation forms heme I, the second hydroxylation results in an unstable dihydroxymethyl group, which spontaneously dehydrates, resulting in the formyl group of heme A. The sequence is that of Heme A synthase from Bacillus mycoides (strain KBAB4) (Bacillus weihenstephanensis).